A 354-amino-acid chain; its full sequence is UDP-N-acetylglucosamine--N-acetylmuramyl-(pentapeptide) pyrophosphoryl-undecaprenol N-acetylglucosamine transferase (354 aa).

UDP-N-acetyl-alpha-D-glucosamine is bound by residues 12–14, asparagine 124, arginine 163, serine 187, isoleucine 240, and glutamine 285; that span reads TGG.

The protein belongs to the glycosyltransferase 28 family. MurG subfamily.

Its subcellular location is the cell inner membrane. The catalysed reaction is di-trans,octa-cis-undecaprenyl diphospho-N-acetyl-alpha-D-muramoyl-L-alanyl-D-glutamyl-meso-2,6-diaminopimeloyl-D-alanyl-D-alanine + UDP-N-acetyl-alpha-D-glucosamine = di-trans,octa-cis-undecaprenyl diphospho-[N-acetyl-alpha-D-glucosaminyl-(1-&gt;4)]-N-acetyl-alpha-D-muramoyl-L-alanyl-D-glutamyl-meso-2,6-diaminopimeloyl-D-alanyl-D-alanine + UDP + H(+). Its pathway is cell wall biogenesis; peptidoglycan biosynthesis. Functionally, cell wall formation. Catalyzes the transfer of a GlcNAc subunit on undecaprenyl-pyrophosphoryl-MurNAc-pentapeptide (lipid intermediate I) to form undecaprenyl-pyrophosphoryl-MurNAc-(pentapeptide)GlcNAc (lipid intermediate II). The protein is UDP-N-acetylglucosamine--N-acetylmuramyl-(pentapeptide) pyrophosphoryl-undecaprenol N-acetylglucosamine transferase of Methylococcus capsulatus (strain ATCC 33009 / NCIMB 11132 / Bath).